Here is a 142-residue protein sequence, read N- to C-terminus: Large ribosomal subunit protein uL11 (142 aa).

Belongs to the universal ribosomal protein uL11 family. Part of the ribosomal stalk of the 50S ribosomal subunit. Interacts with L10 and the large rRNA to form the base of the stalk. L10 forms an elongated spine to which L12 dimers bind in a sequential fashion forming a multimeric L10(L12)X complex. Post-translationally, one or more lysine residues are methylated.

Its function is as follows. Forms part of the ribosomal stalk which helps the ribosome interact with GTP-bound translation factors. The chain is Large ribosomal subunit protein uL11 from Dictyoglomus turgidum (strain DSM 6724 / Z-1310).